Reading from the N-terminus, the 599-residue chain is Aspartate--tRNA(Asp/Asn) ligase (599 aa).

Glu172 is an L-aspartate binding site. The aspartate stretch occupies residues 196–199; it reads QLFK. Arg218 contributes to the L-aspartate binding site. ATP is bound by residues 218-220 and Gln227; that span reads RDE. His454 provides a ligand contact to L-aspartate. An ATP-binding site is contributed by Glu488. Arg495 is an L-aspartate binding site. An ATP-binding site is contributed by 540 to 543; that stretch reads GLDR.

The protein belongs to the class-II aminoacyl-tRNA synthetase family. Type 1 subfamily. As to quaternary structure, homodimer.

The protein resides in the cytoplasm. The catalysed reaction is tRNA(Asx) + L-aspartate + ATP = L-aspartyl-tRNA(Asx) + AMP + diphosphate. Aspartyl-tRNA synthetase with relaxed tRNA specificity since it is able to aspartylate not only its cognate tRNA(Asp) but also tRNA(Asn). Reaction proceeds in two steps: L-aspartate is first activated by ATP to form Asp-AMP and then transferred to the acceptor end of tRNA(Asp/Asn). This is Aspartate--tRNA(Asp/Asn) ligase from Methylibium petroleiphilum (strain ATCC BAA-1232 / LMG 22953 / PM1).